A 189-amino-acid polypeptide reads, in one-letter code: Lutzicidin (189 aa).

Positions 1-22 are cleaved as a signal peptide; it reads MQGFFWKTLLVVALCGTSSSLA. Residues 23–155 constitute a propeptide that is removed on maturation; the sequence is HRPLSYGEAL…DEEKDRPKRV (133 aa). 2 cysteine pairs are disulfide-bonded: C79-C90 and C101-C118. Residues 125–148 are compositionally biased toward acidic residues; the sequence is EEEEEDEEEQKAEVEKDEEKEDEE. The interval 125-152 is disordered; sequence EEEEEDEEEQKAEVEKDEEKEDEEKDRP.

The protein belongs to the cathelicidin family. In terms of tissue distribution, expressed by the venom gland.

Its subcellular location is the secreted. The protein localises to the target cell membrane. Potent antimicrobial peptide against Gram-negative and Gram-positive bacteria. Adopts an amphipathic alpha helical conformation, that may allow to partition into the target membrane. Low hemolytic activities have been observed on mammalian cells. This chain is Lutzicidin, found in Bothrops lutzi (Sertao lancehead).